The primary structure comprises 214 residues: Pyridoxine/pyridoxamine 5'-phosphate oxidase (214 aa).

Substrate is bound by residues 11 to 14 (RREY) and lysine 68. FMN-binding positions include 63-68 (RLVLLK), 78-79 (FT), arginine 84, lysine 85, and glutamine 107. Substrate-binding residues include tyrosine 125 and arginine 129. Residues 142 to 143 (QS) and tryptophan 187 each bind FMN. Substrate is bound at residue 193-195 (RLH). Arginine 197 contributes to the FMN binding site.

It belongs to the pyridoxamine 5'-phosphate oxidase family. Homodimer. Requires FMN as cofactor.

The enzyme catalyses pyridoxamine 5'-phosphate + O2 + H2O = pyridoxal 5'-phosphate + H2O2 + NH4(+). It carries out the reaction pyridoxine 5'-phosphate + O2 = pyridoxal 5'-phosphate + H2O2. It functions in the pathway cofactor metabolism; pyridoxal 5'-phosphate salvage; pyridoxal 5'-phosphate from pyridoxamine 5'-phosphate: step 1/1. It participates in cofactor metabolism; pyridoxal 5'-phosphate salvage; pyridoxal 5'-phosphate from pyridoxine 5'-phosphate: step 1/1. Functionally, catalyzes the oxidation of either pyridoxine 5'-phosphate (PNP) or pyridoxamine 5'-phosphate (PMP) into pyridoxal 5'-phosphate (PLP). This chain is Pyridoxine/pyridoxamine 5'-phosphate oxidase, found in Blochmanniella floridana.